Here is a 304-residue protein sequence, read N- to C-terminus: tRNA dimethylallyltransferase (304 aa).

An ATP-binding site is contributed by 2-9; that stretch reads GPTASGKT. Substrate is bound at residue 4–9; the sequence is TASGKT. Interaction with substrate tRNA regions lie at residues 27–30, 151–155, 232–237, and 265–272; these read DSAL, QRINR, RCVGYR, and KRQITWLR.

This sequence belongs to the IPP transferase family. In terms of assembly, monomer. The cofactor is Mg(2+).

The enzyme catalyses adenosine(37) in tRNA + dimethylallyl diphosphate = N(6)-dimethylallyladenosine(37) in tRNA + diphosphate. In terms of biological role, catalyzes the transfer of a dimethylallyl group onto the adenine at position 37 in tRNAs that read codons beginning with uridine, leading to the formation of N6-(dimethylallyl)adenosine (i(6)A). The sequence is that of tRNA dimethylallyltransferase from Actinobacillus pleuropneumoniae serotype 5b (strain L20).